A 672-amino-acid polypeptide reads, in one-letter code: Zinc finger protein 271 (672 aa).

A disordered region spans residues 1 to 29 (MEIQFNYESQEHHLLSDGENKTKIGKPAS). Basic and acidic residues predominate over residues 9 to 22 (SQEHHLLSDGENKT). The C2H2-type 1; degenerate zinc-finger motif lies at 80 to 102 (HNCDEYGQSFVWNTGLFRHRKTH). 19 consecutive C2H2-type zinc fingers follow at residues 107–129 (YECDKCGKAFSVSSALVLHQRIH), 135–157 (YSCNWCIKSFSRSSDLIKHQRVH), 163–185 (YKCDECGKAFSQSSDLIIHQRIH), 191–213 (YQCSHCSKSFSQRSDLVKHQRIH), 219–241 (YTCNQCNKHFSQSSDVIKHQRIH), 247–269 (YKCDVCAKAFSQSSDLILHQRIH), 275–297 (YPCNQCSKSFSQNSDLIKHRRIH), 303–325 (YKCNECGKAFNQSSVLILHQRIH), 331–353 (YPCDQCSKTFSRLSDLINHQRIH), 359–381 (YPCNQCNKMFSRRSDLVKHHRIH), 387–409 (YECDECGKTFSQSSNLILHQRIH), 415–437 (YPCSDCTKSFSRRSDLVKHQRIH), 443–465 (YACNQCDKSFSQSSDLTKHQRVH), 471–493 (YHCNSCEKAFSQSSDLILHQRIH), 499–521 (YLCTQCSKSFSQNSDLIKHQRIH), 527–549 (YKCSECRKAFSQCSALTLHQRIH), 555–577 (NPCNECGKSFSRHSDLINHQKIH), 583–605 (YKCDACGKAFSTCTDLIEHQKIH), and 611–633 (YRCVQCSRSFSQLSELTIHEEVH).

It belongs to the krueppel C2H2-type zinc-finger protein family.

The protein localises to the nucleus. Functionally, may be involved in transcriptional regulation. In Pongo abelii (Sumatran orangutan), this protein is Zinc finger protein 271 (ZNF271).